The following is a 374-amino-acid chain: Ribosomal RNA large subunit methyltransferase G (374 aa).

The protein belongs to the methyltransferase superfamily. RlmG family.

The protein localises to the cytoplasm. It catalyses the reaction guanosine(1835) in 23S rRNA + S-adenosyl-L-methionine = N(2)-methylguanosine(1835) in 23S rRNA + S-adenosyl-L-homocysteine + H(+). In terms of biological role, specifically methylates the guanine in position 1835 (m2G1835) of 23S rRNA. This is Ribosomal RNA large subunit methyltransferase G from Pseudomonas syringae pv. syringae (strain B728a).